Consider the following 343-residue polypeptide: Probable xyloglucan endotransglucosylase/hydrolase protein 30 (343 aa).

Residues 1 to 23 (MSKSSYNHIFILILCLCLRSSSA) form the signal peptide. Positions 24 to 224 (FTNLNTLSFE…YKFAPFVAEF (201 aa)) constitute a GH16 domain. Glu109 serves as the catalytic Nucleophile. Glu113 acts as the Proton donor in catalysis. Residues Glu113 and 126–128 (QTN) each bind xyloglucan. N-linked (GlcNAc...) asparagine glycosylation is present at Asn132. Xyloglucan contacts are provided by residues 136 to 140 (HRGRE), 203 to 204 (DW), Gly208, and Arg285. Residues Cys280 and Cys293 are joined by a disulfide bond. Residues 306–343 (TGRLKFGGTEARERRRNRRQQRRPEIEIESDPDDRKLL) form a disordered region.

It belongs to the glycosyl hydrolase 16 family. XTH group 3 subfamily. In terms of processing, contains at least one intrachain disulfide bond essential for its enzymatic activity. In terms of tissue distribution, predominantly expressed in green siliques.

The protein localises to the secreted. Its subcellular location is the cell wall. It is found in the extracellular space. The protein resides in the apoplast. It catalyses the reaction breaks a beta-(1-&gt;4) bond in the backbone of a xyloglucan and transfers the xyloglucanyl segment on to O-4 of the non-reducing terminal glucose residue of an acceptor, which can be a xyloglucan or an oligosaccharide of xyloglucan.. Its function is as follows. Catalyzes xyloglucan endohydrolysis (XEH) and/or endotransglycosylation (XET). Cleaves and religates xyloglucan polymers, an essential constituent of the primary cell wall, and thereby participates in cell wall construction of growing tissues. The protein is Probable xyloglucan endotransglucosylase/hydrolase protein 30 (XTH30) of Arabidopsis thaliana (Mouse-ear cress).